The following is a 401-amino-acid chain: Chaperone protein DnaJ (401 aa).

The J domain occupies 4–69 (DYYEVLGVSR…DKRRRYDQFG (66 aa)). The CR-type zinc-finger motif lies at 156–237 (GVEKTLKIKK…CYGEGIKQGD (82 aa)). The Zn(2+) site is built by Cys-169, Cys-172, Cys-185, Cys-188, Cys-211, Cys-214, Cys-225, and Cys-228. 4 CXXCXGXG motif repeats span residues 169–176 (CKECNGSG), 185–192 (CQTCHGSG), 211–218 (CPTCGGEG), and 225–232 (CTACYGEG). Residues 377-401 (AFSPSGSNNDKEEKSFFEKARDIFS) are disordered. A compositionally biased stretch (basic and acidic residues) spans 385–401 (NDKEEKSFFEKARDIFS).

This sequence belongs to the DnaJ family. Homodimer. Zn(2+) is required as a cofactor.

It is found in the cytoplasm. Functionally, participates actively in the response to hyperosmotic and heat shock by preventing the aggregation of stress-denatured proteins and by disaggregating proteins, also in an autonomous, DnaK-independent fashion. Unfolded proteins bind initially to DnaJ; upon interaction with the DnaJ-bound protein, DnaK hydrolyzes its bound ATP, resulting in the formation of a stable complex. GrpE releases ADP from DnaK; ATP binding to DnaK triggers the release of the substrate protein, thus completing the reaction cycle. Several rounds of ATP-dependent interactions between DnaJ, DnaK and GrpE are required for fully efficient folding. Also involved, together with DnaK and GrpE, in the DNA replication of plasmids through activation of initiation proteins. This is Chaperone protein DnaJ from Chlorobium limicola (strain DSM 245 / NBRC 103803 / 6330).